Reading from the N-terminus, the 217-residue chain is Phosphatidylcholine synthase (217 aa).

The chain crosses the membrane as a helical span at residues 1–8 (ACIGVFSL). Topologically, residues 9-16 (VKIYQHEY) are periplasmic. The chain crosses the membrane as a helical span at residues 17 to 37 (IFALWLMFITVVIDAVDGTLA). The Cytoplasmic segment spans residues 38 to 50 (RLVNIKKILPKID). Residues 51–71 (GALLDNIVDYLNYVITPCFFL) form a helical membrane-spanning segment. The Periplasmic portion of the chain corresponds to 72–77 (LVKPGM). Residues 78–98 (LPPEYSVFLIAAVSITSAYQF) traverse the membrane as a helical segment. Over 99–107 (CQCDAKTPD) the chain is Cytoplasmic. Residues 108–128 (HFFKGFPCYWNITILYMFIFN) form a helical membrane-spanning segment. A topological domain (periplasmic) is located at residue T129. Residues 130-149 (SAATNAIILIILSILIFVPV) traverse the membrane as a helical segment. At 150–164 (KYVYPSRLDYLTESR) the chain is on the cytoplasmic side. The helical transmembrane segment at 165–185 (ILKILMHICSIIYAVSSICIL) threads the bilayer. The Periplasmic portion of the chain corresponds to 186-191 (ISYPNT). The helical transmembrane segment at 192-212 (NIICLSLSVAYVGMYLFLSFY) threads the bilayer. The Cytoplasmic segment spans residues 213-217 (RTYYP).

It belongs to the CDP-alcohol phosphatidyltransferase class-I family. It depends on Mn(2+) as a cofactor.

The protein localises to the cell inner membrane. It catalyses the reaction a CDP-1,2-diacyl-sn-glycerol + choline = a 1,2-diacyl-sn-glycero-3-phosphocholine + CMP + H(+). Its function is as follows. Condenses choline with CDP-diglyceride to produce phosphatidylcholine and CMP. The protein is Phosphatidylcholine synthase of Legionella bozemanae (Fluoribacter bozemanae).